A 205-amino-acid chain; its full sequence is MVRVKICGITNLEDALFSVESGADAVGFVFYPKSKRYISPEDARRISVELPPFVFRVGVFVNEEPEKILDVASYVQLNAVQLHGEEPIELCRKIAERILVIKAVGISNERDIERALNYREFPVLLDTKTPEYGGSGKTFDWSLILPYRDQFRYLVLSGGLNPDNVRSAIDMVRPFAVDVSSGVEAFPGKKDHDSIKTFIKNAKGL.

It belongs to the TrpF family.

It carries out the reaction N-(5-phospho-beta-D-ribosyl)anthranilate = 1-(2-carboxyphenylamino)-1-deoxy-D-ribulose 5-phosphate. Its pathway is amino-acid biosynthesis; L-tryptophan biosynthesis; L-tryptophan from chorismate: step 3/5. The polypeptide is N-(5'-phosphoribosyl)anthranilate isomerase (Thermotoga petrophila (strain ATCC BAA-488 / DSM 13995 / JCM 10881 / RKU-1)).